The chain runs to 414 residues: Serine/threonine transporter SstT (414 aa).

Over 2–15 (TTQRSPGLFRRLAH) the chain is Cytoplasmic. Residues 16-36 (GSLVKQILVGLVLGILLAWIS) traverse the membrane as a helical segment. The Periplasmic portion of the chain corresponds to 37–45 (KPAAEAVGL). Residues 46 to 66 (LGTLFVGALKAVAPILVLMLV) form a helical membrane-spanning segment. Residues 67–83 (MASIANHQHGQKTNIRP) lie on the Cytoplasmic side of the membrane. A helical transmembrane segment spans residues 84–104 (ILFLYLLGTFSAALAAVVFSF). At 105 to 142 (AFPSTLHLSSSAGDISPPSGIVEVMRGLVMSMVSNPID) the chain is on the periplasmic side. Residues 143–163 (ALLKGNYIGILVWAIGLGFAL) traverse the membrane as a helical segment. Over 164-179 (RHGNETTKNLVNDMSN) the chain is Cytoplasmic. The helical transmembrane segment at 180–200 (AVTFMVKLVIRFAPFGIFGLV) threads the bilayer. Residues 201–217 (SSTLATTGFSTLWGYAQ) are Periplasmic-facing. The chain crosses the membrane as a helical span at residues 218 to 238 (LLVVLVGCMLLVALVVNPLLV). The Cytoplasmic segment spans residues 239-299 (WWKIRRNPFP…VSIPLGATIN (61 aa)). The chain crosses the membrane as a helical span at residues 300–320 (MAGAAITITVLTLAAVNTLGI). Residues 321-331 (PVDLPTALLLS) lie on the Periplasmic side of the membrane. Residues 332 to 352 (VVASLCACGASGVAGGSLLLI) traverse the membrane as a helical segment. Topologically, residues 353–414 (PLACNMFGIS…DRLANSALRN (62 aa)) are cytoplasmic.

Belongs to the dicarboxylate/amino acid:cation symporter (DAACS) (TC 2.A.23) family.

It is found in the cell inner membrane. The catalysed reaction is L-serine(in) + Na(+)(in) = L-serine(out) + Na(+)(out). It catalyses the reaction L-threonine(in) + Na(+)(in) = L-threonine(out) + Na(+)(out). Its function is as follows. Involved in the import of serine and threonine into the cell, with the concomitant import of sodium (symport system). This chain is Serine/threonine transporter SstT, found in Shigella flexneri.